A 434-amino-acid polypeptide reads, in one-letter code: Enolase (434 aa).

Residue Gln-163 participates in (2R)-2-phosphoglycerate binding. The active-site Proton donor is Glu-205. Residues Asp-243, Glu-291, and Asp-318 each contribute to the Mg(2+) site. Positions 343, 372, 373, and 394 each coordinate (2R)-2-phosphoglycerate. Lys-343 (proton acceptor) is an active-site residue.

Belongs to the enolase family. The cofactor is Mg(2+).

It is found in the cytoplasm. It localises to the secreted. Its subcellular location is the cell surface. The enzyme catalyses (2R)-2-phosphoglycerate = phosphoenolpyruvate + H2O. It participates in carbohydrate degradation; glycolysis; pyruvate from D-glyceraldehyde 3-phosphate: step 4/5. Catalyzes the reversible conversion of 2-phosphoglycerate (2-PG) into phosphoenolpyruvate (PEP). It is essential for the degradation of carbohydrates via glycolysis. In Fusobacterium nucleatum subsp. nucleatum (strain ATCC 25586 / DSM 15643 / BCRC 10681 / CIP 101130 / JCM 8532 / KCTC 2640 / LMG 13131 / VPI 4355), this protein is Enolase.